Here is a 732-residue protein sequence, read N- to C-terminus: Catalase-peroxidase (732 aa).

Positions 1 to 45 (MDTKVDNAGKCPVVHTHTAHGGRSNRDWWPNQLNLRILHQNSSLS) are cleaved as a signal peptide. Positions 97–220 (WHSAGTYRTG…LSAVQMGLIY (124 aa)) form a cross-link, tryptophyl-tyrosyl-methioninium (Trp-Tyr) (with M-246). Histidine 98 acts as the Proton acceptor in catalysis. The segment at residues 220–246 (YVNPEGPNGNPDPLAAARDIRETFARM) is a cross-link (tryptophyl-tyrosyl-methioninium (Tyr-Met) (with W-97)). Residue histidine 261 coordinates heme b.

Belongs to the peroxidase family. Peroxidase/catalase subfamily. In terms of assembly, homodimer or homotetramer. Heme b serves as cofactor. Formation of the three residue Trp-Tyr-Met cross-link is important for the catalase, but not the peroxidase activity of the enzyme.

The catalysed reaction is H2O2 + AH2 = A + 2 H2O. It catalyses the reaction 2 H2O2 = O2 + 2 H2O. Functionally, bifunctional enzyme with both catalase and broad-spectrum peroxidase activity. The chain is Catalase-peroxidase from Rhizobium rhizogenes (strain K84 / ATCC BAA-868) (Agrobacterium radiobacter).